The following is a 355-amino-acid chain: Chorismate synthase (355 aa).

Arginine 48 is a binding site for NADP(+). Residues arginine 125–serine 127, asparagine 238–alanine 239, glycine 278, lysine 293–serine 297, and arginine 319 each bind FMN.

Belongs to the chorismate synthase family. Homotetramer. It depends on FMNH2 as a cofactor.

It catalyses the reaction 5-O-(1-carboxyvinyl)-3-phosphoshikimate = chorismate + phosphate. It functions in the pathway metabolic intermediate biosynthesis; chorismate biosynthesis; chorismate from D-erythrose 4-phosphate and phosphoenolpyruvate: step 7/7. Catalyzes the anti-1,4-elimination of the C-3 phosphate and the C-6 proR hydrogen from 5-enolpyruvylshikimate-3-phosphate (EPSP) to yield chorismate, which is the branch point compound that serves as the starting substrate for the three terminal pathways of aromatic amino acid biosynthesis. This reaction introduces a second double bond into the aromatic ring system. The protein is Chorismate synthase of Baumannia cicadellinicola subsp. Homalodisca coagulata.